Reading from the N-terminus, the 505-residue chain is Exodeoxyribonuclease 7 large subunit (505 aa).

The segment at 466–505 (SGDRDAVIDGEGGPAPAPTAPAPKPRPKPAAPPAGQGDLF) is disordered. The segment covering 480–497 (APAPTAPAPKPRPKPAAP) has biased composition (pro residues).

Belongs to the XseA family. Heterooligomer composed of large and small subunits.

The protein resides in the cytoplasm. It catalyses the reaction Exonucleolytic cleavage in either 5'- to 3'- or 3'- to 5'-direction to yield nucleoside 5'-phosphates.. Its function is as follows. Bidirectionally degrades single-stranded DNA into large acid-insoluble oligonucleotides, which are then degraded further into small acid-soluble oligonucleotides. This is Exodeoxyribonuclease 7 large subunit from Caulobacter vibrioides (strain NA1000 / CB15N) (Caulobacter crescentus).